A 425-amino-acid chain; its full sequence is UPF0597 protein VP2173 (425 aa).

It belongs to the UPF0597 family.

The chain is UPF0597 protein VP2173 from Vibrio parahaemolyticus serotype O3:K6 (strain RIMD 2210633).